A 117-amino-acid chain; its full sequence is DNA-directed RNA polymerase subunit omega (117 aa).

It belongs to the RNA polymerase subunit omega family. The RNAP catalytic core consists of 2 alpha, 1 beta, 1 beta' and 1 omega subunit. When a sigma factor is associated with the core the holoenzyme is formed, which can initiate transcription.

The enzyme catalyses RNA(n) + a ribonucleoside 5'-triphosphate = RNA(n+1) + diphosphate. Functionally, promotes RNA polymerase assembly. Latches the N- and C-terminal regions of the beta' subunit thereby facilitating its interaction with the beta and alpha subunits. The chain is DNA-directed RNA polymerase subunit omega from Cereibacter sphaeroides (strain ATCC 17029 / ATH 2.4.9) (Rhodobacter sphaeroides).